A 164-amino-acid chain; its full sequence is MERFLENVMYASRWLLAPVYFGLSLALIALALKFFQEILHVLPNVFALAEADLILVLLSLVDMTLVGGLLVMVMFSGYENFVSQLDISAGKEKLNWLGKMDATSLKNKVAASIVAISSIHLLRVFMDARNVPDNKLMWYVIIHLTFVLSAFVMGYLDRLTRHNH.

The next 3 helical transmembrane spans lie at 10-32 (YASR…ALAL), 53-75 (LILV…MVMF), and 136-155 (LMWY…VMGY).

This sequence belongs to the UPF0114 family.

It localises to the cell membrane. This is UPF0114 protein YqhA from Salmonella typhi.